The following is a 1034-amino-acid chain: Putative beta-glucuronidase (1034 aa).

Glu-432 acts as the Proton donor in catalysis. Positions 909-1034 (VDISAEEGVL…GPFIDELFID (126 aa)) constitute a CBM6 domain.

It belongs to the glycosyl hydrolase 2 family.

The protein resides in the cytoplasm. It carries out the reaction a beta-D-glucuronoside + H2O = D-glucuronate + an alcohol. In terms of biological role, glycoside hydrolase that may be involved in ulvan degradation. Ulvan is the main polysaccharide component of the Ulvales (green seaweed) cell wall. It is composed of disaccharide building blocks comprising 3-sulfated rhamnose (Rha3S) linked to D-glucuronic acid (GlcA), L-iduronic acid (IduA), or D-xylose (Xyl). In Formosa agariphila (strain DSM 15362 / KCTC 12365 / LMG 23005 / KMM 3901 / M-2Alg 35-1), this protein is Putative beta-glucuronidase.